Consider the following 125-residue polypeptide: Nuclear envelope phosphatase-regulatory subunit 1 (125 aa).

Met1 is modified (N-acetylmethionine). Helical transmembrane passes span 33–53 and 65–85; these read MLLIVVSVCTATGAWNWLIDP and WNHPFFTISCITLIGLFFAGI.

This sequence belongs to the CNEP1R1 family. As to quaternary structure, interacts with CTDNEP1; the complex dephosphorylates LPIN1 and LPIN2.

Its subcellular location is the nucleus membrane. The protein resides in the cytoplasm. Functionally, forms with the serine/threonine protein phosphatase CTDNEP1 an active complex which dephosphorylates and may activate LPIN1 and LPIN2. LPIN1 and LPIN2 are phosphatidate phosphatases that catalyze the conversion of phosphatidic acid to diacylglycerol and control the metabolism of fatty acids at different levels. May indirectly modulate the lipid composition of nuclear and/or endoplasmic reticulum membranes and be required for proper nuclear membrane morphology and/or dynamics. May also indirectly regulate the production of lipid droplets and triacylglycerol. This Bos taurus (Bovine) protein is Nuclear envelope phosphatase-regulatory subunit 1 (CNEP1R1).